The chain runs to 55 residues: Large ribosomal subunit protein bL33 (55 aa).

The protein belongs to the bacterial ribosomal protein bL33 family.

The protein is Large ribosomal subunit protein bL33 of Xanthomonas oryzae pv. oryzae (strain PXO99A).